Here is a 450-residue protein sequence, read N- to C-terminus: Bifunctional protein GlmU (450 aa).

The interval 1-229 (MRRHAIILAA…VEEIMGVNDR (229 aa)) is pyrophosphorylase. Residues 8 to 11 (LAAG), Lys-22, Gln-72, and 77 to 78 (GT) each bind UDP-N-acetyl-alpha-D-glucosamine. Residue Asp-102 participates in Mg(2+) binding. Gly-139, Glu-154, and Asn-227 together coordinate UDP-N-acetyl-alpha-D-glucosamine. Asn-227 is a binding site for Mg(2+). The interval 230 to 250 (VMLSQAENAMQRRTNHYHMLN) is linker. An N-acetyltransferase region spans residues 251 to 450 (GVTIIDPDST…RQTTKEGYRK (200 aa)). UDP-N-acetyl-alpha-D-glucosamine is bound by residues Arg-332 and Lys-350. The active-site Proton acceptor is His-362. Residues Tyr-365 and Asn-376 each contribute to the UDP-N-acetyl-alpha-D-glucosamine site. Residues 385–386 (NY), Ala-422, and Arg-439 each bind acetyl-CoA.

This sequence in the N-terminal section; belongs to the N-acetylglucosamine-1-phosphate uridyltransferase family. It in the C-terminal section; belongs to the transferase hexapeptide repeat family. As to quaternary structure, homotrimer. It depends on Mg(2+) as a cofactor.

It localises to the cytoplasm. The enzyme catalyses alpha-D-glucosamine 1-phosphate + acetyl-CoA = N-acetyl-alpha-D-glucosamine 1-phosphate + CoA + H(+). It catalyses the reaction N-acetyl-alpha-D-glucosamine 1-phosphate + UTP + H(+) = UDP-N-acetyl-alpha-D-glucosamine + diphosphate. It functions in the pathway nucleotide-sugar biosynthesis; UDP-N-acetyl-alpha-D-glucosamine biosynthesis; N-acetyl-alpha-D-glucosamine 1-phosphate from alpha-D-glucosamine 6-phosphate (route II): step 2/2. It participates in nucleotide-sugar biosynthesis; UDP-N-acetyl-alpha-D-glucosamine biosynthesis; UDP-N-acetyl-alpha-D-glucosamine from N-acetyl-alpha-D-glucosamine 1-phosphate: step 1/1. Its pathway is bacterial outer membrane biogenesis; LPS lipid A biosynthesis. Catalyzes the last two sequential reactions in the de novo biosynthetic pathway for UDP-N-acetylglucosamine (UDP-GlcNAc). The C-terminal domain catalyzes the transfer of acetyl group from acetyl coenzyme A to glucosamine-1-phosphate (GlcN-1-P) to produce N-acetylglucosamine-1-phosphate (GlcNAc-1-P), which is converted into UDP-GlcNAc by the transfer of uridine 5-monophosphate (from uridine 5-triphosphate), a reaction catalyzed by the N-terminal domain. This Staphylococcus aureus (strain MRSA252) protein is Bifunctional protein GlmU.